A 295-amino-acid chain; its full sequence is Excinuclease cho (295 aa).

The region spanning 33–108 (TRPGVYLFHG…IKEQQPLFNK (76 aa)) is the GIY-YIG domain.

Its function is as follows. Incises the DNA at the 3' side of a lesion during nucleotide excision repair. Incises the DNA farther away from the lesion than UvrC. Not able to incise the 5' site of a lesion. In vitro, the incision activity of Cho is UvrA and UvrB dependent. When a lesion remains because UvrC is not able to induce the 3' incision, Cho incises the DNA. Then UvrC makes the 5' incision. The combined action of Cho and UvrC broadens the substrate range of nucleotide excision repair. This Escherichia coli (strain K12) protein is Excinuclease cho (cho).